We begin with the raw amino-acid sequence, 293 residues long: Glycine N-methyltransferase (293 aa).

The residue at position 2 (Val-2) is an N-acetylvaline. (6S)-5-methyl-5,6,7,8-tetrahydrofolate-binding residues include Ser-4 and Tyr-6. Ser-10 is modified (phosphoserine). S-adenosyl-L-methionine contacts are provided by Tyr-22, Trp-31, Tyr-34, and Arg-41. The residue at position 34 (Tyr-34) is a Phosphotyrosine. Position 46 is an N6-succinyllysine (Lys-46). S-adenosyl-L-methionine-binding positions include Ala-65, 86 to 88 (DAS), 117 to 118 (NW), Leu-137, 137 to 140 (LGNS), and Arg-176. N6-succinyllysine is present on residues Lys-191, Lys-196, and Lys-201. His-215 lines the (6S)-5-methyl-5,6,7,8-tetrahydrofolate pocket. Tyr-221 is a binding site for S-adenosyl-L-methionine. Arg-240 provides a ligand contact to (6S)-5-methyl-5,6,7,8-tetrahydrofolate.

This sequence belongs to the class I-like SAM-binding methyltransferase superfamily. Glycine N-methyltransferase family. Homotetramer.

The protein localises to the cytoplasm. It carries out the reaction glycine + S-adenosyl-L-methionine = sarcosine + S-adenosyl-L-homocysteine + H(+). With respect to regulation, inhibited by 5-methyltetrahydrofolate monoglutamate and by 5-methyltetrahydrofolate pentaglutamate, inhibition is much more effective by the pentaglutamate form than by the monoglutamate form. Two molecules of 5-methyltetrahydrofolate are bound per tetramer. The binding sites are localized between subunits. Inhibitor binding may preclude movements of the polypeptide chain that are necessary for enzyme activity. Its function is as follows. Catalyzes the methylation of glycine by using S-adenosylmethionine (AdoMet) to form N-methylglycine (sarcosine) with the concomitant production of S-adenosylhomocysteine (AdoHcy), a reaction regulated by the binding of 5-methyltetrahydrofolate. Plays an important role in the regulation of methyl group metabolism by regulating the ratio between S-adenosyl-L-methionine and S-adenosyl-L-homocysteine. This chain is Glycine N-methyltransferase (Gnmt), found in Mus musculus (Mouse).